A 773-amino-acid chain; its full sequence is ATP-dependent RNA helicase MAK5 (773 aa).

Residues 73 to 82 show a composition bias toward basic and acidic residues; it reads KDSNKEKVGD. Disordered regions lie at residues 73 to 99 and 114 to 144; these read KDSN…ESEL and SAAS…VDED. A compositionally biased stretch (acidic residues) spans 83–99; the sequence is DQESVENESGSDSESEL. T135 carries the phosphothreonine modification. At S138 the chain carries Phosphoserine. The Q motif motif lies at 171-199; the sequence is EWTNLAPLSMTILQSLQNLNFLRPTEIQK. In terms of domain architecture, Helicase ATP-binding spans 202 to 399; the sequence is IPVIMQGVDV…SSSRQVKDRR (198 aa). Residue 215–222 participates in ATP binding; sequence ASTGSGKT. The DEAD box motif lies at 333 to 336; sequence DEAD. A Helicase C-terminal domain is found at 452–615; sequence DLYCYYFLTM…STDLNSRSTN (164 aa). S678 carries the post-translational modification Phosphoserine.

It belongs to the DEAD box helicase family. DDX24/MAK5 subfamily.

Its subcellular location is the nucleus. It is found in the nucleolus. It catalyses the reaction ATP + H2O = ADP + phosphate + H(+). ATP-binding RNA helicase involved in the biogenesis of 60S ribosomal subunits and is required for the normal formation of 25S and 5.8S rRNAs. Required for the maintenance of dsRNA killer plasmid. This is ATP-dependent RNA helicase MAK5 (MAK5) from Saccharomyces cerevisiae (strain ATCC 204508 / S288c) (Baker's yeast).